We begin with the raw amino-acid sequence, 181 residues long: Bifunctional protein PyrR (181 aa).

Residues V100–T112 carry the PRPP-binding motif.

It belongs to the purine/pyrimidine phosphoribosyltransferase family. PyrR subfamily. As to quaternary structure, homodimer and homohexamer; in equilibrium.

It carries out the reaction UMP + diphosphate = 5-phospho-alpha-D-ribose 1-diphosphate + uracil. In terms of biological role, regulates transcriptional attenuation of the pyrimidine nucleotide (pyr) operon by binding in a uridine-dependent manner to specific sites on pyr mRNA. This disrupts an antiterminator hairpin in the RNA and favors formation of a downstream transcription terminator, leading to a reduced expression of downstream genes. Its function is as follows. Also displays a weak uracil phosphoribosyltransferase activity which is not physiologically significant. This is Bifunctional protein PyrR from Pelotomaculum thermopropionicum (strain DSM 13744 / JCM 10971 / SI).